We begin with the raw amino-acid sequence, 86 residues long: MEQKRGMRKTRVGVVVSDKMDKTVVVAVERHVQHPLYKKTIKRTTKFKAHDENNECRVGDKVLIMETRPLSKEKRWRVVQILERAK.

The protein belongs to the universal ribosomal protein uS17 family. As to quaternary structure, part of the 30S ribosomal subunit.

One of the primary rRNA binding proteins, it binds specifically to the 5'-end of 16S ribosomal RNA. The chain is Small ribosomal subunit protein uS17 from Caldicellulosiruptor bescii (strain ATCC BAA-1888 / DSM 6725 / KCTC 15123 / Z-1320) (Anaerocellum thermophilum).